The primary structure comprises 162 residues: N5-carboxyaminoimidazole ribonucleotide mutase (162 aa).

Substrate contacts are provided by Ser-11, Asp-14, and Arg-41.

Belongs to the AIR carboxylase family. Class I subfamily.

It carries out the reaction 5-carboxyamino-1-(5-phospho-D-ribosyl)imidazole + H(+) = 5-amino-1-(5-phospho-D-ribosyl)imidazole-4-carboxylate. Its pathway is purine metabolism; IMP biosynthesis via de novo pathway; 5-amino-1-(5-phospho-D-ribosyl)imidazole-4-carboxylate from 5-amino-1-(5-phospho-D-ribosyl)imidazole (N5-CAIR route): step 2/2. Functionally, catalyzes the conversion of N5-carboxyaminoimidazole ribonucleotide (N5-CAIR) to 4-carboxy-5-aminoimidazole ribonucleotide (CAIR). The sequence is that of N5-carboxyaminoimidazole ribonucleotide mutase from Bacillus subtilis (strain 168).